Here is a 269-residue protein sequence, read N- to C-terminus: Zinc transporter ZupT (269 aa).

Helical transmembrane passes span 12 to 32, 41 to 61, 75 to 95, 126 to 146, 152 to 172, 187 to 207, 211 to 231, and 249 to 269; these read AFSI…LVMF, LSFG…TEIF, DHAF…IALI, MMAA…TFFA, AVGM…GISI, VWAC…GYLV, FLSP…MVFL, and TVYG…LFHF. Fe(2+) is bound by residues N136 and E139. E139 and H164 together coordinate Zn(2+). Positions 165, 168, and 197 each coordinate Fe(2+). E168 contributes to the Zn(2+) binding site.

This sequence belongs to the ZIP transporter (TC 2.A.5) family. ZupT subfamily.

The protein resides in the cell inner membrane. It catalyses the reaction Zn(2+)(in) = Zn(2+)(out). In terms of biological role, mediates zinc uptake. May also transport other divalent cations. This Neisseria meningitidis serogroup A / serotype 4A (strain DSM 15465 / Z2491) protein is Zinc transporter ZupT.